Here is a 101-residue protein sequence, read N- to C-terminus: Urease subunit beta (101 aa).

The protein belongs to the urease beta subunit family. In terms of assembly, heterotrimer of UreA (gamma), UreB (beta) and UreC (alpha) subunits. Three heterotrimers associate to form the active enzyme.

The protein resides in the cytoplasm. The enzyme catalyses urea + 2 H2O + H(+) = hydrogencarbonate + 2 NH4(+). Its pathway is nitrogen metabolism; urea degradation; CO(2) and NH(3) from urea (urease route): step 1/1. The polypeptide is Urease subunit beta (Stutzerimonas stutzeri (strain A1501) (Pseudomonas stutzeri)).